Here is a 475-residue protein sequence, read N- to C-terminus: UDP-N-acetylmuramate--L-alanine ligase (475 aa).

ATP is bound at residue 112–118 (GTHGKTT).

It belongs to the MurCDEF family.

Its subcellular location is the cytoplasm. The enzyme catalyses UDP-N-acetyl-alpha-D-muramate + L-alanine + ATP = UDP-N-acetyl-alpha-D-muramoyl-L-alanine + ADP + phosphate + H(+). Its pathway is cell wall biogenesis; peptidoglycan biosynthesis. Cell wall formation. The protein is UDP-N-acetylmuramate--L-alanine ligase of Cupriavidus pinatubonensis (strain JMP 134 / LMG 1197) (Cupriavidus necator (strain JMP 134)).